Consider the following 1276-residue polypeptide: Histone-lysine N-methyltransferase PRDM16 (1276 aa).

Residues 1–10 (MRSKARARKL) are compositionally biased toward basic residues. Positions 1 to 68 (MRSKARARKL…DFTPKEGSPY (68 aa)) are disordered. In terms of domain architecture, SET spans 82–211 (ADFELRESSI…PGEELLVHVK (130 aa)). A C2H2-type 1; atypical zinc finger spans residues 230-253 (FRCDECDELFQSKLDLRRHKKYTC). C2H2-type zinc fingers lie at residues 281–303 (HECKDCERMFPNKYSLEQHMVIH), 309–331 (YKCDQCPKAFNWKSNLIRHQMSH), 337–360 (FECENCVKVFTDPSNLQRHIRSQH), 366–388 (HACPDCGKTFATSSGLKQHKHIH), and 394–416 (FICEVCHKSYTQFSNLCRHKRMH). The segment at 423–445 (IKCKDCGQMFSTTSSLNKHRRFC) adopts a C2H2-type 7; atypical zinc-finger fold. Disordered stretches follow at residues 533–657 (SLLK…APPG) and 772–804 (PFDLTTKPKDVKPILPMPKGPSAPASGEEQPLD). Polar residues predominate over residues 561 to 570 (AVSNSSQGTT). Residues 575–597 (PEEKFESRLEDSCVEKLKTRSSD) show a composition bias toward basic and acidic residues. Positions 609–624 (TTTGTDLDTTTGTGSD) are enriched in low complexity. The span at 632–642 (DPDKDKGKGKS) shows a compositional bias: basic and acidic residues. Residues 679–1038 (DEQLLTATGA…KHEHENAPVS (360 aa)) are interaction with CTBP1, CTBP2 and ZNF516. The interval 739-1276 (PFTDRALAHN…SGAFHPINHL (538 aa)) is mediates interaction with SKI and regulation of TGF-beta signaling. 3 consecutive C2H2-type zinc fingers follow at residues 951–973 (YTCRYCGKIFPRSANLTRHLRTH), 979–1002 (YRCKYCDRSFSISSNLQRHVRNIH), and 1008–1032 (FKCHLCNRCFGQQTNLDRHLKKHEH). Disordered stretches follow at residues 1033-1065 (ENAPVSQHPGVLTNHLGTSASSPTSESDNHALL) and 1105-1163 (AQCP…EPAA). The segment covering 1047 to 1058 (HLGTSASSPTSE) has biased composition (polar residues). The span at 1116 to 1133 (EDVEEEDDDDLEEDDEDS) shows a compositional bias: acidic residues.

This sequence belongs to the PRDM16 family. In terms of assembly, interacts with CEBPA, CEBPB and CEBPD; the interaction is direct. Interacts with PPARG and PPARA; controls brown adipocytes differentiation. Interacts with CTBP1 and CTBP2; represses the expression of WAT-specific genes. Interacts with PPARGC1A and PPARGC1B; interaction with PPARGC1A or PPARGC1B activates the transcription of BAT-specific gene. Interacts with HDAC1, SKI, SMAD2 and SMAD3; the interaction with SKI promotes the recruitment of SMAD3-HDAC1 complex on the promoter of TGF-beta target genes. Interacts with ZNF516; the interaction is direct and may play a role in the transcription of brown adipose tissue-specific gene. As to expression, expressed in uterus and kidney. Expressed in both cardiomyocytes and interstitial cells.

It localises to the nucleus. The protein resides in the cytoplasm. The enzyme catalyses L-lysyl(9)-[histone H3] + S-adenosyl-L-methionine = N(6)-methyl-L-lysyl(9)-[histone H3] + S-adenosyl-L-homocysteine + H(+). In terms of biological role, binds DNA and functions as a transcriptional regulator. Displays histone methyltransferase activity and monomethylates 'Lys-9' of histone H3 (H3K9me1) in vitro. Probably catalyzes the monomethylation of free histone H3 in the cytoplasm which is then transported to the nucleus and incorporated into nucleosomes where SUV39H methyltransferases use it as a substrate to catalyze histone H3 'Lys-9' trimethylation. Likely to be one of the primary histone methyltransferases along with MECOM/PRDM3 that direct cytoplasmic H3K9me1 methylation. Functions in the differentiation of brown adipose tissue (BAT) which is specialized in dissipating chemical energy in the form of heat in response to cold or excess feeding while white adipose tissue (WAT) is specialized in the storage of excess energy and the control of systemic metabolism. Together with CEBPB, regulates the differentiation of myoblastic precursors into brown adipose cells. Functions as a repressor of TGF-beta signaling. Functionally, binds DNA and functions as a transcriptional regulator. Functions as a repressor of TGF-beta signaling. May regulate granulocyte differentiation. The chain is Histone-lysine N-methyltransferase PRDM16 from Homo sapiens (Human).